The primary structure comprises 403 residues: GTPase Obg (403 aa).

Residues 1 to 159 (MKFIDESLIR…RDLLLELMLL (159 aa)) form the Obg domain. Residues 160 to 333 (ADVGMLGFPN…LCRDIMDFII (174 aa)) enclose the OBG-type G domain. GTP is bound by residues 166–173 (GFPNAGKS), 191–195 (FTTLV), 213–216 (DIPG), 283–286 (NKID), and 314–316 (SAA). Serine 173 and threonine 193 together coordinate Mg(2+). Positions 363-403 (EYQFDDDEDWDDDWTEEDDDEDWDDDWTEEDDEGIEFIYKP) are disordered. Residues 365–397 (QFDDDEDWDDDWTEEDDDEDWDDDWTEEDDEGI) show a composition bias toward acidic residues.

Belongs to the TRAFAC class OBG-HflX-like GTPase superfamily. OBG GTPase family. As to quaternary structure, monomer. It depends on Mg(2+) as a cofactor.

It is found in the cytoplasm. Its function is as follows. An essential GTPase which binds GTP, GDP and possibly (p)ppGpp with moderate affinity, with high nucleotide exchange rates and a fairly low GTP hydrolysis rate. Plays a role in control of the cell cycle, stress response, ribosome biogenesis and in those bacteria that undergo differentiation, in morphogenesis control. This is GTPase Obg from Haemophilus influenzae (strain PittEE).